The following is a 760-amino-acid chain: DNA mismatch repair protein Mlh1 (760 aa).

Lysine 33 carries the post-translational modification N6-acetyllysine. Residues asparagine 38, aspartate 63, 82–84 (TSK), and 100–104 (RGEAL) contribute to the ATP site. Lysine 241 is subject to N6-acetyllysine. A disordered region spans residues 354 to 375 (GPSGEAARPTTGVASSSTSGSG). The span at 363-375 (TTGVASSSTSGSG) shows a compositional bias: low complexity. An N6-acetyllysine modification is found at lysine 377. The segment covering 400-409 (VSSLGPSQPQ) has biased composition (polar residues). The interval 400–488 (VSSLGPSQPQ…EDSDVEMVEN (89 aa)) is disordered. The interaction with EXO1 stretch occupies residues 412–654 (APVRGARTEG…LLIDSYVPPL (243 aa)). A compositionally biased stretch (basic and acidic residues) spans 417–428 (ARTEGSPERATR). A compositionally biased stretch (low complexity) spans 434–446 (LALPAPAEAAAES). The segment covering 455–472 (METSDAAQKAAPTSSPGS) has biased composition (polar residues). The short motif at 475 to 478 (KRHR) is the Nuclear localization signal element. Residue serine 481 is modified to Phosphoserine.

This sequence belongs to the DNA mismatch repair MutL/HexB family. As to quaternary structure, component of the DNA mismatch repair (MMR) complex composed at least of MSH2, MSH3, MSH6, PMS1 and MLH1. Heterodimer of MLH1 and PMS2 (MutL alpha), MLH1 and PMS1 (MutL beta) or MLH1 and MLH3 (MutL gamma). Forms a ternary complex with MutS alpha (MSH2-MSH6) or MutS beta (MSH2-MSH3). Part of the BRCA1-associated genome surveillance complex (BASC), which contains BRCA1, MSH2, MSH6, MLH1, ATM, BLM, PMS2 and the RAD50-MRE11-NBS1 protein complex. This association could be a dynamic process changing throughout the cell cycle and within subnuclear domains. Interacts with MCM9; the interaction recruits MLH1 to chromatin. Interacts with MCM8. Interacts with PMS2. Interacts with MBD4. Interacts with EXO1. Interacts with MTMR15/FAN1. Post-translationally, acetylated. Deacetylated by HDAC6 which prevents the MutL alpha complex, formed by the MLH1-PMS2 heterodimer, from being recruited to the MutS alpha complex, formed by the MSH2-MSH6 heterodimer, leading to tolerance of DNA damage.

The protein localises to the nucleus. It localises to the chromosome. Functionally, heterodimerizes with Pms2 to form MutL alpha, a component of the post-replicative DNA mismatch repair system (MMR). DNA repair is initiated by MutS alpha (Msh2-Msh6) or MutS beta (MSH2-MSH3) binding to a dsDNA mismatch, then MutL alpha is recruited to the heteroduplex. Assembly of the MutL-MutS-heteroduplex ternary complex in presence of RFC and PCNA is sufficient to activate endonuclease activity of Pms2. It introduces single-strand breaks near the mismatch and thus generates new entry points for the exonuclease EXO1 to degrade the strand containing the mismatch. DNA methylation would prevent cleavage and therefore assure that only the newly mutated DNA strand is going to be corrected. MutL alpha (Mlh1-Pms2) interacts physically with the clamp loader subunits of DNA polymerase III, suggesting that it may play a role to recruit the DNA polymerase III to the site of the MMR. Also implicated in DNA damage signaling, a process which induces cell cycle arrest and can lead to apoptosis in case of major DNA damages. Heterodimerizes with Mlh3 to form MutL gamma which plays a role in meiosis. The sequence is that of DNA mismatch repair protein Mlh1 (Mlh1) from Mus musculus (Mouse).